A 372-amino-acid chain; its full sequence is tRNA-specific 2-thiouridylase MnmA (372 aa).

Residues 16–23 and methionine 42 each bind ATP; that span reads GMSGGVDS. Positions 102–104 are interaction with target base in tRNA; that stretch reads NPD. Cysteine 107 serves as the catalytic Nucleophile. Cysteines 107 and 205 form a disulfide. Glycine 132 provides a ligand contact to ATP. The tract at residues 155-157 is interaction with tRNA; that stretch reads KDQ. Residue cysteine 205 is the Cysteine persulfide intermediate of the active site. The tract at residues 317 to 318 is interaction with tRNA; the sequence is RY.

This sequence belongs to the MnmA/TRMU family.

The protein localises to the cytoplasm. It catalyses the reaction S-sulfanyl-L-cysteinyl-[protein] + uridine(34) in tRNA + AH2 + ATP = 2-thiouridine(34) in tRNA + L-cysteinyl-[protein] + A + AMP + diphosphate + H(+). Functionally, catalyzes the 2-thiolation of uridine at the wobble position (U34) of tRNA, leading to the formation of s(2)U34. The sequence is that of tRNA-specific 2-thiouridylase MnmA from Shewanella baltica (strain OS195).